We begin with the raw amino-acid sequence, 350 residues long: Heme A synthase (350 aa).

The next 8 helical transmembrane spans lie at 14 to 34 (VAIW…IGGF), 95 to 115 (YVHR…FIYF), 125 to 145 (VVIK…AGWY), 162 to 182 (LALH…QFFD), 202 to 222 (VGII…VAGL), 260 to 280 (VQFI…ILTV), 296 to 316 (IIQI…AIAI), and 317 to 337 (AHQV…CYLR). His-264 provides a ligand contact to heme. His-318 contacts heme.

Belongs to the COX15/CtaA family. Type 2 subfamily. In terms of assembly, interacts with CtaB. Requires heme b as cofactor.

The protein resides in the cell membrane. It catalyses the reaction Fe(II)-heme o + 2 A + H2O = Fe(II)-heme a + 2 AH2. Its pathway is porphyrin-containing compound metabolism; heme A biosynthesis; heme A from heme O: step 1/1. Its function is as follows. Catalyzes the conversion of heme O to heme A by two successive hydroxylations of the methyl group at C8. The first hydroxylation forms heme I, the second hydroxylation results in an unstable dihydroxymethyl group, which spontaneously dehydrates, resulting in the formyl group of heme A. This Wolbachia pipientis wMel protein is Heme A synthase.